Reading from the N-terminus, the 190-residue chain is CASP-like protein 1E1 (190 aa).

The interval 1–21 (MEHESKTKMDGIEMEKGKKEN) is disordered. Topologically, residues 1–28 (MEHESKTKMDGIEMEKGKKENGSRKGVE) are cytoplasmic. A helical membrane pass occupies residues 29-49 (ITMRVLALVLTMVAATVLGVA). At 50–83 (KQTEVVPIKLIPTLPPLNVATTAKASYLSAFVYN) the chain is on the extracellular side. The helical transmembrane segment at 84–104 (ICANAIACGYTAISIMIVIIS) threads the bilayer. Residues 105-111 (KGRRSKC) lie on the Cytoplasmic side of the membrane. A helical membrane pass occupies residues 112-132 (LLMAVLIGDLMMVALLCSSTG). The Extracellular portion of the chain corresponds to 133–163 (AAGAIGLMGRHGNKHVMWKKVCGVFGKFCNQ). The chain crosses the membrane as a helical span at residues 164 to 184 (AAVSVAITLIASVVFMLLVVL). The Cytoplasmic segment spans residues 185-190 (DALKLP).

It belongs to the Casparian strip membrane proteins (CASP) family. In terms of assembly, homodimer and heterodimers.

It localises to the cell membrane. The chain is CASP-like protein 1E1 from Arabidopsis lyrata subsp. lyrata (Lyre-leaved rock-cress).